Here is a 453-residue protein sequence, read N- to C-terminus: Phosphomannomutase (453 aa).

The active-site Phosphoserine intermediate is Ser-96. Ser-96, Asp-243, Asp-245, and Asp-247 together coordinate Mg(2+).

This sequence belongs to the phosphohexose mutase family. It depends on Mg(2+) as a cofactor.

The enzyme catalyses alpha-D-mannose 1-phosphate = D-mannose 6-phosphate. It functions in the pathway nucleotide-sugar biosynthesis; GDP-alpha-D-mannose biosynthesis; alpha-D-mannose 1-phosphate from D-fructose 6-phosphate: step 2/2. The protein operates within bacterial outer membrane biogenesis; LPS O-antigen biosynthesis. Its function is as follows. Involved in GDP-mannose biosynthesis which serves as the activated sugar nucleotide precursor for mannose residues in cell surface polysaccharides. This enzyme participates in synthesis of the LPS O7 antigen. This chain is Phosphomannomutase (manB), found in Escherichia coli.